A 457-amino-acid polypeptide reads, in one-letter code: UDP-N-acetylmuramoyl-tripeptide--D-alanyl-D-alanine ligase (457 aa).

Gly109 to Thr115 contributes to the ATP binding site.

This sequence belongs to the MurCDEF family. MurF subfamily.

The protein resides in the cytoplasm. The enzyme catalyses D-alanyl-D-alanine + UDP-N-acetyl-alpha-D-muramoyl-L-alanyl-gamma-D-glutamyl-meso-2,6-diaminopimelate + ATP = UDP-N-acetyl-alpha-D-muramoyl-L-alanyl-gamma-D-glutamyl-meso-2,6-diaminopimeloyl-D-alanyl-D-alanine + ADP + phosphate + H(+). Its pathway is cell wall biogenesis; peptidoglycan biosynthesis. In terms of biological role, involved in cell wall formation. Catalyzes the final step in the synthesis of UDP-N-acetylmuramoyl-pentapeptide, the precursor of murein. The polypeptide is UDP-N-acetylmuramoyl-tripeptide--D-alanyl-D-alanine ligase (Haemophilus influenzae (strain ATCC 51907 / DSM 11121 / KW20 / Rd)).